Reading from the N-terminus, the 247-residue chain is tRNA uridine(34) hydroxylase (247 aa).

The 95-residue stretch at 124 to 218 (TKQDVIVIDT…YLEDTQNKNN (95 aa)) folds into the Rhodanese domain. Cys178 (cysteine persulfide intermediate) is an active-site residue.

It belongs to the TrhO family.

The enzyme catalyses uridine(34) in tRNA + AH2 + O2 = 5-hydroxyuridine(34) in tRNA + A + H2O. In terms of biological role, catalyzes oxygen-dependent 5-hydroxyuridine (ho5U) modification at position 34 in tRNAs. The polypeptide is tRNA uridine(34) hydroxylase (Rickettsia rickettsii (strain Iowa)).